Reading from the N-terminus, the 333-residue chain is uncharacterized protein (333 aa).

Residues 1–23 form the signal peptide; sequence MSRSFMIILTIMLIALSLGEVLA. A helical transmembrane segment spans residues 232 to 252; sequence SFFLGVLVTLMILSPVIVYLW.

It is found in the membrane. This is an uncharacterized protein from Pyrococcus abyssi (strain GE5 / Orsay).